Here is an 82-residue protein sequence, read N- to C-terminus: Metallothionein (82 aa).

Positions 6, 8, 11, 13, 29, 33, 37, 43, 48, and 50 each coordinate Cd(2+). Cysteine 6, cysteine 8, and cysteine 11 together coordinate Zn(2+). Zn(2+) is bound by residues cysteine 29, cysteine 33, histidine 37, cysteine 43, cysteine 48, and cysteine 50. Residues 61-82 are disordered; that stretch reads ITNNQLDEALEETFPASDPISP.

This sequence belongs to the metallothionein superfamily.

Metallothioneins are small proteins that have a high content of cysteine residues which allow them to bind heavy metal ions through clusters of thiolate bonds. Preferentially, binds four Cd(2+) ions. Also binds three Zn(2+) ions but with less affinity. Required for long-term viability. May play a role in the storage or sequestration of metals when present in excess. This chain is Metallothionein, found in Pseudomonas fluorescens (strain Q2-87).